A 241-amino-acid polypeptide reads, in one-letter code: Octanoyltransferase (241 aa).

The 189-residue stretch at 50-238 folds into the BPL/LPL catalytic domain; sequence KIAHEQVWLL…AFEQIFGPTI (189 aa). Substrate-binding positions include 89-96, 169-171, and 182-184; these read RGGEFTYH, AIG, and GIS. The active-site Acyl-thioester intermediate is the cysteine 200.

This sequence belongs to the LipB family.

It is found in the cytoplasm. The enzyme catalyses octanoyl-[ACP] + L-lysyl-[protein] = N(6)-octanoyl-L-lysyl-[protein] + holo-[ACP] + H(+). It functions in the pathway protein modification; protein lipoylation via endogenous pathway; protein N(6)-(lipoyl)lysine from octanoyl-[acyl-carrier-protein]: step 1/2. Its function is as follows. Catalyzes the transfer of endogenously produced octanoic acid from octanoyl-acyl-carrier-protein onto the lipoyl domains of lipoate-dependent enzymes. Lipoyl-ACP can also act as a substrate although octanoyl-ACP is likely to be the physiological substrate. The sequence is that of Octanoyltransferase from Bartonella bacilliformis (strain ATCC 35685 / KC583 / Herrer 020/F12,63).